The following is a 158-amino-acid chain: Phosphopantetheine adenylyltransferase (158 aa).

Ser9 contributes to the substrate binding site. Residues 9–10 and His17 contribute to the ATP site; that span reads SF. Substrate-binding residues include Lys41, Val73, and Lys87. Residues 88–90, Glu98, and 122–128 contribute to the ATP site; these read GLR and YSFVSSS.

This sequence belongs to the bacterial CoaD family. Homohexamer. Requires Mg(2+) as cofactor.

The protein resides in the cytoplasm. The catalysed reaction is (R)-4'-phosphopantetheine + ATP + H(+) = 3'-dephospho-CoA + diphosphate. It functions in the pathway cofactor biosynthesis; coenzyme A biosynthesis; CoA from (R)-pantothenate: step 4/5. Its function is as follows. Reversibly transfers an adenylyl group from ATP to 4'-phosphopantetheine, yielding dephospho-CoA (dPCoA) and pyrophosphate. This chain is Phosphopantetheine adenylyltransferase, found in Mycolicibacterium smegmatis (strain ATCC 700084 / mc(2)155) (Mycobacterium smegmatis).